We begin with the raw amino-acid sequence, 349 residues long: tRNA pseudouridine synthase D (349 aa).

Phe27 serves as a coordination point for substrate. The Nucleophile role is filled by Asp80. Asn129 is a substrate binding site. The 149-residue stretch at 155–303 (GVPNYFGAQR…VEAARRAMLL (149 aa)) folds into the TRUD domain. Substrate is bound at residue Phe329.

This sequence belongs to the pseudouridine synthase TruD family.

It catalyses the reaction uridine(13) in tRNA = pseudouridine(13) in tRNA. Functionally, responsible for synthesis of pseudouridine from uracil-13 in transfer RNAs. In Escherichia coli O6:H1 (strain CFT073 / ATCC 700928 / UPEC), this protein is tRNA pseudouridine synthase D.